Consider the following 206-residue polypeptide: Cytidylate kinase (206 aa).

Residue 7-15 (GPAASGKGT) coordinates ATP.

It belongs to the cytidylate kinase family. Type 1 subfamily.

Its subcellular location is the cytoplasm. It catalyses the reaction CMP + ATP = CDP + ADP. The catalysed reaction is dCMP + ATP = dCDP + ADP. This chain is Cytidylate kinase, found in Azorhizobium caulinodans (strain ATCC 43989 / DSM 5975 / JCM 20966 / LMG 6465 / NBRC 14845 / NCIMB 13405 / ORS 571).